The sequence spans 154 residues: Cold shock domain-containing protein C2 (154 aa).

A Phosphoserine modification is found at Ser19. The segment at 38 to 62 (GGGIAPRDLPSPLPTKRTRTYSATA) is disordered. A CSD domain is found at 69 to 136 (VFKGVCKQFS…KFQAVEVVLT (68 aa)).

The protein resides in the nucleus. It is found in the cytoplasm. Functionally, RNA-binding factor which binds specifically to the very 3'-UTR ends of both histone H1 and H3.3 mRNAs, encompassing the polyadenylation signal. Might play a central role in the negative regulation of histone variant synthesis in the developing brain. This Mus musculus (Mouse) protein is Cold shock domain-containing protein C2 (Csdc2).